The following is a 337-amino-acid chain: G-protein coupled receptor 26 (337 aa).

At 1–10 (MNSWDAGLAG) the chain is on the extracellular side. A helical membrane pass occupies residues 11-31 (LLVGTIGVSLLSNGLVLLCLL). Over 32 to 47 (HSADIRRQAPALFTLN) the chain is Cytoplasmic. The chain crosses the membrane as a helical span at residues 48 to 68 (LTCGNLLCTVVNMPLTLAGVV). Over 69–81 (AQRQPAGDRLCRL) the chain is Extracellular. Cysteines 79 and 156 form a disulfide. The chain crosses the membrane as a helical span at residues 82 to 102 (AAFLDTFLAANSMLSMAALSI). Residues 103 to 123 (DRWVAVVFPLSYRAKMRLRDA) lie on the Cytoplasmic side of the membrane. Residues 124-144 (AFMVAYTWLHALTFPATALAL) form a helical membrane-spanning segment. Topologically, residues 145 to 168 (SWLGFHQLYASCTLCSRRPDERLR) are extracellular. A helical transmembrane segment spans residues 169-189 (FAVFTSAFHALSFLLSFIVLC). The Cytoplasmic segment spans residues 190-245 (FTYLKVLKVARFHCKRIDVITMQTLVLLVDIHPSVRERCLEEQKRRRQRATKKIST). The chain crosses the membrane as a helical span at residues 246 to 266 (FIGTFLVCFAPYVITRLVELF). Topologically, residues 267–276 (STAPIGSHWG) are extracellular. Residues 277 to 297 (VLSKCLAYSKAASDPFVYSLL) traverse the membrane as a helical segment. At 298–337 (RHQYRRSCKELLNRIFNRRSLHSVGLTGDSHSQNILPVSE) the chain is on the cytoplasmic side.

This sequence belongs to the G-protein coupled receptor 1 family. Exclusively expressed in the brain. Prominent expression is detected throughout the entire neocortex at all rostrocaudal and dorsoventral levels. Strong expression is detected in olfactory and auditory sensory areas.

The protein resides in the cell membrane. Orphan receptor. Displays a significant level of constitutive activity. Its effect is mediated by G(s)-alpha protein that stimulate adenylate cyclase, resulting in an elevation of intracellular cAMP. The polypeptide is G-protein coupled receptor 26 (Gpr26) (Mus musculus (Mouse)).